The chain runs to 155 residues: D-aminoacyl-tRNA deacylase (155 aa).

The Gly-cisPro motif, important for rejection of L-amino acids signature appears at 137 to 138 (GP).

Belongs to the DTD family. In terms of assembly, homodimer.

Its subcellular location is the cytoplasm. The enzyme catalyses glycyl-tRNA(Ala) + H2O = tRNA(Ala) + glycine + H(+). It carries out the reaction a D-aminoacyl-tRNA + H2O = a tRNA + a D-alpha-amino acid + H(+). Functionally, an aminoacyl-tRNA editing enzyme that deacylates mischarged D-aminoacyl-tRNAs. Also deacylates mischarged glycyl-tRNA(Ala), protecting cells against glycine mischarging by AlaRS. Acts via tRNA-based rather than protein-based catalysis; rejects L-amino acids rather than detecting D-amino acids in the active site. By recycling D-aminoacyl-tRNA to D-amino acids and free tRNA molecules, this enzyme counteracts the toxicity associated with the formation of D-aminoacyl-tRNA entities in vivo and helps enforce protein L-homochirality. The protein is D-aminoacyl-tRNA deacylase of Paracidovorax citrulli (strain AAC00-1) (Acidovorax citrulli).